Consider the following 475-residue polypeptide: Adenosylhomocysteinase (475 aa).

Residues Thr61, Asp140, and Glu200 each coordinate substrate. Residue Thr201–Thr203 coordinates NAD(+). Substrate is bound by residues Lys230 and Asp234. NAD(+)-binding positions include Asn235, Gly264–Gly269, Glu287, Asn322, Ile343–His345, and Asn388.

This sequence belongs to the adenosylhomocysteinase family. It depends on NAD(+) as a cofactor.

It localises to the cytoplasm. The enzyme catalyses S-adenosyl-L-homocysteine + H2O = L-homocysteine + adenosine. Its pathway is amino-acid biosynthesis; L-homocysteine biosynthesis; L-homocysteine from S-adenosyl-L-homocysteine: step 1/1. Its function is as follows. May play a key role in the regulation of the intracellular concentration of adenosylhomocysteine. This chain is Adenosylhomocysteinase, found in Paracidovorax citrulli (strain AAC00-1) (Acidovorax citrulli).